Reading from the N-terminus, the 343-residue chain is tRNA N6-adenosine threonylcarbamoyltransferase (343 aa).

Fe cation-binding residues include His120 and His124. Substrate contacts are provided by residues 142 to 146 (VVSGG), Asp175, Gly188, Asp192, and Asn281. Asp310 is a binding site for Fe cation.

It belongs to the KAE1 / TsaD family. The cofactor is Fe(2+).

It is found in the cytoplasm. The enzyme catalyses L-threonylcarbamoyladenylate + adenosine(37) in tRNA = N(6)-L-threonylcarbamoyladenosine(37) in tRNA + AMP + H(+). Its function is as follows. Required for the formation of a threonylcarbamoyl group on adenosine at position 37 (t(6)A37) in tRNAs that read codons beginning with adenine. Is involved in the transfer of the threonylcarbamoyl moiety of threonylcarbamoyl-AMP (TC-AMP) to the N6 group of A37, together with TsaE and TsaB. TsaD likely plays a direct catalytic role in this reaction. The sequence is that of tRNA N6-adenosine threonylcarbamoyltransferase from Bacillus cereus (strain ATCC 10987 / NRS 248).